The primary structure comprises 295 residues: Calcium-regulated actin-bundling protein (295 aa).

Monomer.

May contribute to the structure and reorganization of filopodia and pseudopodia accompanying cell movements. In Dictyostelium discoideum (Social amoeba), this protein is Calcium-regulated actin-bundling protein (abpB).